The following is an 83-amino-acid chain: Small ribosomal subunit protein bS18 (83 aa).

It belongs to the bacterial ribosomal protein bS18 family. As to quaternary structure, part of the 30S ribosomal subunit. Forms a tight heterodimer with protein bS6.

In terms of biological role, binds as a heterodimer with protein bS6 to the central domain of the 16S rRNA, where it helps stabilize the platform of the 30S subunit. The polypeptide is Small ribosomal subunit protein bS18 (Cytophaga hutchinsonii (strain ATCC 33406 / DSM 1761 / CIP 103989 / NBRC 15051 / NCIMB 9469 / D465)).